Here is a 330-residue protein sequence, read N- to C-terminus: Cathepsin K (330 aa).

An N-terminal signal peptide occupies residues 1–16 (MWGLKVVLLLPVMSSA). A propeptide spans 17-115 (LYPEEILDTQ…TLYIPDWEGR (99 aa)) (activation peptide). The N-linked (GlcNAc...) asparagine glycan is linked to Asn104. Disulfide bonds link Cys137–Cys178, Cys171–Cys211, and Cys270–Cys319. The active site involves Cys140. Catalysis depends on residues His277 and Asn297.

This sequence belongs to the peptidase C1 family. Expressed in the thyroid epithelial cells.

The protein localises to the lysosome. The protein resides in the secreted. It is found in the apical cell membrane. It carries out the reaction Broad proteolytic activity. With small-molecule substrates and inhibitors, the major determinant of specificity is P2, which is preferably Leu, Met &gt; Phe, and not Arg.. Functionally, thiol protease involved in osteoclastic bone resorption and may participate partially in the disorder of bone remodeling. Displays potent endoprotease activity against fibrinogen at acid pH. May play an important role in extracellular matrix degradation. Involved in the release of thyroid hormone thyroxine (T4) by limited proteolysis of TG/thyroglobulin in the thyroid follicle lumen. The sequence is that of Cathepsin K (CTSK) from Sus scrofa (Pig).